We begin with the raw amino-acid sequence, 37 residues long: Large ribosomal subunit protein bL36 (37 aa).

This sequence belongs to the bacterial ribosomal protein bL36 family.

This chain is Large ribosomal subunit protein bL36, found in Borreliella burgdorferi (strain ATCC 35210 / DSM 4680 / CIP 102532 / B31) (Borrelia burgdorferi).